The sequence spans 449 residues: Galactosyl transferase CpsE (449 aa).

The next 5 membrane-spanning stretches (helical) occupy residues 5–22, 27–46, 59–78, 88–107, and 258–280; these read VVVYFSASLTLTLITPNF, DLLFVLLIHYIVFYLSDFYR, MVLKYSFYYIFISSSLFFIF, SFFTFIAMNSILLYLLNSFL, and FLDITGAIIGLLICGIVAIFLVP.

This sequence belongs to the bacterial sugar transferase family.

The protein resides in the cell membrane. In terms of biological role, galactosyl transferase is essential for the assembly of the group B streptococci (GBS) type III capsular polysaccharide. May be involved in the formation of either or both galactosidic bonds by catalyzing the addition of galactose to an oligosaccharide precursor or to a lipid intermediate. Type III capsular polysaccharide consists of a linear backbone with short side chains ending in residues of N-acetylneuraminic acid or sialic acid. The presence of sialic acid on the surface of the organism inhibits activation of the alternative pathway of complement and is thought to be an important element in the virulence function of the capsule. The sequence is that of Galactosyl transferase CpsE (cpsE) from Streptococcus agalactiae serotype III (strain NEM316).